The sequence spans 265 residues: Hydroxyethylthiazole kinase 2 (265 aa).

Met-39 provides a ligand contact to substrate. The ATP site is built by Lys-115 and Thr-168. Position 195 (Gly-195) interacts with substrate.

This sequence belongs to the Thz kinase family. It depends on Mg(2+) as a cofactor.

It catalyses the reaction 5-(2-hydroxyethyl)-4-methylthiazole + ATP = 4-methyl-5-(2-phosphooxyethyl)-thiazole + ADP + H(+). It participates in cofactor biosynthesis; thiamine diphosphate biosynthesis; 4-methyl-5-(2-phosphoethyl)-thiazole from 5-(2-hydroxyethyl)-4-methylthiazole: step 1/1. Functionally, catalyzes the phosphorylation of the hydroxyl group of 4-methyl-5-beta-hydroxyethylthiazole (THZ). This is Hydroxyethylthiazole kinase 2 from Clostridium botulinum (strain 657 / Type Ba4).